Consider the following 267-residue polypeptide: MGQKINPFGYRLGITENHRSKWFSDSNKVGERYRDFVLEDDAIRKAMSKDLERAGVSRIVIERTRDRVRVDIHTARPGIVIGRRGAEAERVRAKLEKLTGKQVQLNIFEVKNAALDAQLVAQGIAEQLTNRVTFRRAMRKAQQDAMRAGAKGIRIKLSGRLGGAEMSRSEFYREGCVPLQTLRALIDYGFFEAKTTYGRIGVKVWIYKGDMTEREFEEQQAQQSNNRQGRRGDRRPRRGQRNAAPQQNAAAEAPAAAEAPAATETKE.

The 69-residue stretch at 43–111 folds into the KH type-2 domain; the sequence is IRKAMSKDLE…QVQLNIFEVK (69 aa). The disordered stretch occupies residues 216-267; that stretch reads FEEQQAQQSNNRQGRRGDRRPRRGQRNAAPQQNAAAEAPAAAEAPAATETKE. Residues 228-240 show a composition bias toward basic residues; the sequence is QGRRGDRRPRRGQ. A compositionally biased stretch (low complexity) spans 241–267; the sequence is RNAAPQQNAAAEAPAAAEAPAATETKE.

This sequence belongs to the universal ribosomal protein uS3 family. In terms of assembly, part of the 30S ribosomal subunit. Forms a tight complex with proteins S10 and S14.

Its function is as follows. Binds the lower part of the 30S subunit head. Binds mRNA in the 70S ribosome, positioning it for translation. In Bifidobacterium adolescentis (strain ATCC 15703 / DSM 20083 / NCTC 11814 / E194a), this protein is Small ribosomal subunit protein uS3.